The following is a 122-amino-acid chain: Phosphoribosyl-ATP pyrophosphatase (122 aa).

The protein belongs to the PRA-PH family.

The protein resides in the cytoplasm. It carries out the reaction 1-(5-phospho-beta-D-ribosyl)-ATP + H2O = 1-(5-phospho-beta-D-ribosyl)-5'-AMP + diphosphate + H(+). Its pathway is amino-acid biosynthesis; L-histidine biosynthesis; L-histidine from 5-phospho-alpha-D-ribose 1-diphosphate: step 2/9. The protein is Phosphoribosyl-ATP pyrophosphatase of Burkholderia mallei (strain NCTC 10247).